We begin with the raw amino-acid sequence, 254 residues long: Small ribosomal subunit protein uS2 (254 aa).

The protein belongs to the universal ribosomal protein uS2 family.

This Borrelia duttonii (strain Ly) protein is Small ribosomal subunit protein uS2.